The following is a 209-amino-acid chain: FMN-dependent NADH:quinone oxidoreductase (209 aa).

FMN is bound by residues S9 and 15-17 (SNS).

Belongs to the azoreductase type 1 family. As to quaternary structure, homodimer. FMN is required as a cofactor.

The catalysed reaction is 2 a quinone + NADH + H(+) = 2 a 1,4-benzosemiquinone + NAD(+). It catalyses the reaction N,N-dimethyl-1,4-phenylenediamine + anthranilate + 2 NAD(+) = 2-(4-dimethylaminophenyl)diazenylbenzoate + 2 NADH + 2 H(+). Quinone reductase that provides resistance to thiol-specific stress caused by electrophilic quinones. Its function is as follows. Also exhibits azoreductase activity. Catalyzes the reductive cleavage of the azo bond in aromatic azo compounds to the corresponding amines. This Bordetella bronchiseptica (strain ATCC BAA-588 / NCTC 13252 / RB50) (Alcaligenes bronchisepticus) protein is FMN-dependent NADH:quinone oxidoreductase.